Consider the following 390-residue polypeptide: MRTLLDLDPKGKRVLVRVDYNVPVQDGKVQDETRILESLPTLRHLLAGGASLVLLSHLGRPKGPDPKYSLAPVGEALRAHLPEARFAPFPPGSEEARREAEALRPGEVLLLENVRFEPGEEKNDPELSARYARLGEAFVLDAFGSAHRAHASVVGVARLLPAYAGFLMEKEVRALSRLLKDPERPYAVVLGGAKVSDKIGVIESLLPRIDRLLIGGAMAFTFLKALGGEVGRSLVEEDRLDLAKDLLGRAEALGVRVYLPEDVVAAERIEAGVETRVFPARAIPVPYMGLDIGPKTREAFARALEGARTVFWNGPMGVFEVPPFDEGTLAVGQAIAALEGAFTVVGGGDSVAAVNRLGLKERFGHVSTGGGASLEFLEKGTLPGLEVLEG.

Substrate contacts are provided by residues aspartate 19–asparagine 21, arginine 34, histidine 57–arginine 60, arginine 115, and arginine 148. ATP contacts are provided by residues lysine 198, glycine 289, glutamate 320, and glycine 347–serine 350.

Belongs to the phosphoglycerate kinase family. In terms of assembly, monomer.

Its subcellular location is the cytoplasm. The catalysed reaction is (2R)-3-phosphoglycerate + ATP = (2R)-3-phospho-glyceroyl phosphate + ADP. It functions in the pathway carbohydrate degradation; glycolysis; pyruvate from D-glyceraldehyde 3-phosphate: step 2/5. The protein is Phosphoglycerate kinase (pgk) of Thermus thermophilus (strain ATCC 27634 / DSM 579 / HB8).